A 585-amino-acid polypeptide reads, in one-letter code: Pre-hexon-linking protein IIIa (585 aa).

Positions 1–24 (MMQDATDPAVRAALQSQPSGLNST) are disordered. The tract at residues 1–106 (MMQDATDPAV…ALLQRVARYN (106 aa)) is peripentonal hexon-tethering domain. The segment covering 14–24 (LQSQPSGLNST) has biased composition (polar residues). The segment at 138–251 (GSMVALNAFL…FTDSGSVSRD (114 aa)) is binding to hexon-linking protein. Ser225 is modified (phosphoserine; by host). Position 274 is a phosphothreonine; by host (Thr274). Phosphoserine; by host occurs at positions 310, 444, 449, 450, 452, 469, and 473. The disordered stretch occupies residues 438–475 (AALRKESFRRPSSLSDLGAAAPRSDASSPFPSLIGSFT). The segment covering 462–475 (DASSPFPSLIGSFT) has biased composition (polar residues). At Tyr490 the chain carries Phosphotyrosine; by host. Ser494 and Ser515 each carry phosphoserine; by host. Residues 528 to 573 (QEHRDVPGPRPPTRRQRHDRQRGLVWEDDDSADDSSVLDLGGSGNP) form a disordered region. Positions 571 to 585 (GNPFAHLRPRLGRMF) are excised as a propeptide.

This sequence belongs to the adenoviridae hexon-linking protein IIIa family. Interacts with hexon proteins; this interaction tethers the peripentonal hexons to hexons situated in the facet. Interacts with the penton protein (via N-terminus). Interacts with packaging protein 3; this interaction is required to promote correct genome packaging. Post-translationally, cleaved near the C-terminus by the viral protease during virion maturation to form the mature protein.

It localises to the virion. Its subcellular location is the host nucleus. Structural component of the virion that acts as a cement protein on the capsid exterior which mediates the interactions between the hexons, including the peripentonal hexons, and reaches all the way to the penton vertices. Two hexon linking proteins IIIa, one from each facet, stabilize the unique edge interface between a pair of facets. As the virus enters the host cell, hexon linking proteins IIIa are shed concomitant with virion acidification in the endosome. During virus assembly, seems to play a role in the serotype specificity of the packaging of viral DNA via its interaction with packaging protein 3. This is Pre-hexon-linking protein IIIa from Human adenovirus C serotype 2 (HAdV-2).